The sequence spans 352 residues: 4-hydroxy-3-methylbut-2-enyl diphosphate reductase (352 aa).

C36 serves as a coordination point for [4Fe-4S] cluster. Positions 76 and 114 each coordinate (2E)-4-hydroxy-3-methylbut-2-enyl diphosphate. Dimethylallyl diphosphate is bound by residues H76 and H114. Positions 76 and 114 each coordinate isopentenyl diphosphate. C136 contacts [4Fe-4S] cluster. H164 is a binding site for (2E)-4-hydroxy-3-methylbut-2-enyl diphosphate. H164 serves as a coordination point for dimethylallyl diphosphate. Isopentenyl diphosphate is bound at residue H164. E166 acts as the Proton donor in catalysis. A (2E)-4-hydroxy-3-methylbut-2-enyl diphosphate-binding site is contributed by T204. C234 lines the [4Fe-4S] cluster pocket. 4 residues coordinate (2E)-4-hydroxy-3-methylbut-2-enyl diphosphate: S262, S263, N264, and S309. Dimethylallyl diphosphate contacts are provided by S262, S263, N264, and S309. 4 residues coordinate isopentenyl diphosphate: S262, S263, N264, and S309.

Belongs to the IspH family. [4Fe-4S] cluster is required as a cofactor.

The catalysed reaction is isopentenyl diphosphate + 2 oxidized [2Fe-2S]-[ferredoxin] + H2O = (2E)-4-hydroxy-3-methylbut-2-enyl diphosphate + 2 reduced [2Fe-2S]-[ferredoxin] + 2 H(+). The enzyme catalyses dimethylallyl diphosphate + 2 oxidized [2Fe-2S]-[ferredoxin] + H2O = (2E)-4-hydroxy-3-methylbut-2-enyl diphosphate + 2 reduced [2Fe-2S]-[ferredoxin] + 2 H(+). The protein operates within isoprenoid biosynthesis; dimethylallyl diphosphate biosynthesis; dimethylallyl diphosphate from (2E)-4-hydroxy-3-methylbutenyl diphosphate: step 1/1. Its pathway is isoprenoid biosynthesis; isopentenyl diphosphate biosynthesis via DXP pathway; isopentenyl diphosphate from 1-deoxy-D-xylulose 5-phosphate: step 6/6. Catalyzes the conversion of 1-hydroxy-2-methyl-2-(E)-butenyl 4-diphosphate (HMBPP) into a mixture of isopentenyl diphosphate (IPP) and dimethylallyl diphosphate (DMAPP). Acts in the terminal step of the DOXP/MEP pathway for isoprenoid precursor biosynthesis. In Bifidobacterium longum (strain NCC 2705), this protein is 4-hydroxy-3-methylbut-2-enyl diphosphate reductase.